The following is a 98-amino-acid chain: Class II hydrophobin 3 (98 aa).

The first 18 residues, 1–18 (MQFTTTTLIAILSALAVA), serve as a signal peptide directing secretion. N-linked (GlcNAc...) asparagine glycans are attached at residues Asn26 and Asn54. 4 disulfide bridges follow: Cys35–Cys83, Cys44–Cys74, Cys45–Cys57, and Cys84–Cys95.

The protein belongs to the cerato-ulmin hydrophobin family.

The protein localises to the secreted. Its subcellular location is the cell wall. In terms of biological role, aerial growth, conidiation, and dispersal of filamentous fungi in the environment rely upon a capability of their secreting small amphipathic proteins called hydrophobins (HPBs) with low sequence identity. Class I can self-assemble into an outermost layer of rodlet bundles on aerial cell surfaces, conferring cellular hydrophobicity that supports fungal growth, development and dispersal; whereas Class II form highly ordered films at water-air interfaces through intermolecular interactions but contribute nothing to the rodlet structure. In Botryotinia fuckeliana, hydrophobins are not involved in conferring surface hydrophobicity to conidia and aerial hyphae and their function in sclerotia and fruiting bodies remains to be investigated. The protein is Class II hydrophobin 3 of Botryotinia fuckeliana (strain B05.10) (Noble rot fungus).